The sequence spans 4293 residues: Polycystin-1 (4293 aa).

Positions 1 to 23 (MPLGAPALLALALGLGLWLGALA) are cleaved as a signal peptide. One can recognise an LRRNT domain in the interval 24–67 (GDPGRGCGPCPLPCFCGPAPDAACRVNCSGRWLQTLGPSLRIPA). The Extracellular segment spans residues 24 to 3066 (GDPGRGCGPC…IFPEPSASIN (3043 aa)). 2 N-linked (GlcNAc...) asparagine glycosylation sites follow: Asn-50 and Asn-89. LRR repeat units follow at residues 68–91 (DATA…VNLS) and 92–113 (ALVE…VFAN). N-linked (GlcNAc...) asparagine glycosylation is found at Asn-116 and Asn-121. Residues 125–178 (NPFECNCGLAWLPRWAKEHQVHVVQSEATTCRGPIPLAGQPLLSIPLLDNACGE) enclose the LRRCT domain. The WSC domain occupies 177 to 271 (GEEYVACLPD…PTLLQHTFPA (95 aa)). Residues Asn-187 and Asn-239 are each glycosylated (N-linked (GlcNAc...) asparagine). Positions 272–359 (SPGATLVGPH…VQVEATPTVL (88 aa)) constitute a PKD 1 domain. N-linked (GlcNAc...) asparagine glycosylation is present at Asn-370. The C-type lectin domain occupies 415 to 530 (GNGHCYRLVA…CSAPHSYVCE (116 aa)). 2 disulfides stabilise this stretch: Cys-436–Cys-529 and Cys-507–Cys-521. Positions 613 to 632 (GGAAAVPEGSSEPDNRTEPA) are disordered. Asn-627 carries N-linked (GlcNAc...) asparagine glycosylation. The LDL-receptor class A; atypical domain maps to 633 to 666 (PKCVPEELWCPGANVCIPFDASCNSHVCINGSVS). Intrachain disulfides connect Cys-635–Cys-648 and Cys-642–Cys-660. Asn-662, Asn-740, Asn-804, Asn-835, Asn-848, Asn-859, Asn-884, Asn-915, Asn-998, Asn-1004, Asn-1028, Asn-1084, Asn-1096, Asn-1107, Asn-1172, Asn-1188, Asn-1234, Asn-1263, Asn-1330, Asn-1342, Asn-1376, Asn-1444, Asn-1449, Asn-1468, Asn-1535, Asn-1548, Asn-1557, Asn-1643, Asn-1657, Asn-1706, Asn-1730, Asn-1788, Asn-1831, Asn-1863, and Asn-1876 each carry an N-linked (GlcNAc...) asparagine glycan. PKD domains lie at 849–922 (ATAT…RVTA), 929–1014 (LRAV…NKMH), 1017–1123 (WVSA…LPNV), 1121–1209 (PNVA…LHGL), 1207–1292 (HGLT…EVLH), 1288–1377 (LEVL…IRNI), 1376–1463 (NITL…VLVT), 1462–1545 (VTGI…VRGL), 1544–1629 (GLTI…IEGL), 1630–1718 (QVAG…VESL), 1716–1802 (ESLI…VGGL), 1804–1886 (IRTS…IVNL), 1885–1970 (NLML…VVGL), 1972–2053 (VPNC…MVEV), and 2056–2144 (IIQY…ACRE). Asn-1987, Asn-2046, Asn-2070, Asn-2121, Asn-2244, Asn-2349, Asn-2391, Asn-2408, Asn-2414, Asn-2563, Asn-2640, Asn-2713, Asn-2749, Asn-2813, Asn-2836, Asn-2873, Asn-2948, and Asn-2986 each carry an N-linked (GlcNAc...) asparagine glycan. Positions 2142-2828 (CREPEVEVAL…QLIFLVDSNP (687 aa)) constitute an REJ domain. The region spanning 2857-3055 (PIEQLAAERA…SLFVPPSHVQ (199 aa)) is the GAIN-B domain. Cys-3007 and Cys-3035 are disulfide-bonded. Residues 3007–3055 (CQYFSEEMMMWRTEGIVPLEETSPSQAVCLTRHLTAFGASLFVPPSHVQ) are GPS. Residues 3067 to 3087 (YIVLLTCVICLVTYVVMAMIL) form a helical membrane-spanning segment. The Cytoplasmic portion of the chain corresponds to 3088–3269 (RKLDQLDVSR…DRPPRSRFTR (182 aa)). Residues 3110–3225 (FKYEILVKTG…EANGGLVEKE (116 aa)) enclose the PLAT domain. A helical transmembrane segment spans residues 3270–3290 (VQRVTCCVLLLCLFLAANAVW). At 3291–3315 (YGVVRDTTYSMGPVSSLISPGVDTV) the chain is on the extracellular side. Residues 3316-3336 (AIGLVSSVVVYPVYLAVLFLF) traverse the membrane as a helical segment. Residues 3337–3549 (RMSRSKVSGD…LPAWCAPLAH (213 aa)) lie on the Cytoplasmic side of the membrane. The chain crosses the membrane as a helical span at residues 3550–3570 (GLSLLLVAVAVAVSGWIGASF). The Extracellular portion of the chain corresponds to 3571-3572 (PP). The helical transmembrane segment at 3573 to 3593 (SVSVMWLLSSSSSFLASFLGW) threads the bilayer. Residues 3594–3655 (EPLKVLLEAL…LAKEEARKVK (62 aa)) are Cytoplasmic-facing. A helical membrane pass occupies residues 3656–3676 (RLHDMLKRLLVYMLFLLVTLL). The Extracellular portion of the chain corresponds to 3677-3891 (ANYGDASCHG…RLSTGLSLPL (215 aa)). N-linked (GlcNAc...) asparagine glycosylation is found at Asn-3728 and Asn-3780. The chain crosses the membrane as a helical span at residues 3892–3912 (LTSVCLLLFALYFSMAEVQTW). Topologically, residues 3913-3925 (RKDGCACTARPDT) are cytoplasmic. Residues 3926–3946 (WARCLLVILTAATGLVRLAQL) form a helical membrane-spanning segment. At 3947 to 3974 (GIADRQWTHFVQDHPRHFTSFDQVAQLG) the chain is on the extracellular side. Residues 3975–3995 (SVARGLAASLLFLLLVKAAQQ) form a helical membrane-spanning segment. Topologically, residues 3996-4017 (LRFVRQWSVFGKTLCRALPELM) are cytoplasmic. The chain crosses the membrane as a helical span at residues 4018 to 4038 (GATLGLVLLGVAYAQMAILLI). The Extracellular portion of the chain corresponds to 4039–4080 (SSGADTLYNMARAFLVLCPGARVPTLCPSESWYLSPLLCVGL). The helical transmembrane segment at 4081–4100 (WALRVWGALRLGAILLRWRY) threads the bilayer. At 4101-4293 (HALRGELYRP…PNNKVHPSST (193 aa)) the chain is on the cytoplasmic side. 2 disordered regions span residues 4150–4197 (PLPS…STLK) and 4235–4293 (SLQG…PSST). The segment covering 4153 to 4172 (SRSSRGSKSSPVVLPPSSGS) has biased composition (low complexity). Position 4156 is a phosphoserine; by PRKX; in vitro (Ser-4156). Polar residues predominate over residues 4173-4195 (EASHPSTSSSQPDGPSASLSRST). Residues 4210–4241 (ESLLVQFDRLNQATEDVYQLEQQLQSLQGHGH) adopt a coiled-coil conformation. Low complexity predominate over residues 4238–4256 (GHGHNGPPSSPSPGCFPGS). Polar residues predominate over residues 4265 to 4276 (SRASQGLDQTVG).

It belongs to the polycystin family. Component of the heterotetrameric polycystin channel complex with PKD2; the tetramer contains one PKD1 chain and three PKD2 chains. Interacts with PKD2; the interaction is required for ciliary localization. Interacts with PKD2L1. Interacts with PRKX; involved in differentiation and controlled morphogenesis of the kidney. Interacts (via extracellular domain) with WNT3A, WNT4 and WNT9B. Interacts with WNT5A, DVL1 and DVL2. Interacts with NPHP1 (via SH3 domain). Interacts with BBS1, BBS4, BBS5 and TTC8. Interacts with RGS7. Interacts (via C-terminal domain) with RABEP1; the interaction connects PKD1:PKD2 to GGA1 and ARL3 that mediate the ciliary targeting. Interacts (via the PKD repeats in the N-terminal extracellular region) with EPCIP; the interaction is not dependent on N-glycosylation of either protein. In terms of processing, N-glycosylated. After synthesis, undergoes autoproteolytic cleavage between Leu-3040 and Thr-3041 in the GPS region of the GAIN-B domain. Cleavage at the GPS region occurs through a cis-autoproteolytic mechanism involving an ester-intermediate via N-O acyl rearrangement. This process takes place in the early secretory pathway, depends on initial N-glycosylation, and requires the REJ domain. PKD1 is ubiquitously and incompletely cleaved in wild-type mice, so that uncleaved and cleaved PKD1 molecules coexist. The differential patterns of cleavage during embryonic development, as well as in adult mice, suggest different functions of uncleaved and cleaved molecules.

The protein resides in the cell membrane. It localises to the cell projection. The protein localises to the cilium. It is found in the endoplasmic reticulum. Its subcellular location is the golgi apparatus. The protein resides in the vesicle. It localises to the secreted. The protein localises to the extracellular exosome. Functionally, component of a heteromeric calcium-permeable ion channel formed by PKD1 and PKD2 that is activated by interaction between PKD1 and a Wnt family member, such as WNT3A and WNT9B. Both PKD1 and PKD2 are required for channel activity. Involved in renal tubulogenesis. Involved in fluid-flow mechanosensation by the primary cilium in renal epithelium. Acts as a regulator of cilium length, together with PKD2. The dynamic control of cilium length is essential in the regulation of mechanotransductive signaling. The cilium length response creates a negative feedback loop whereby fluid shear-mediated deflection of the primary cilium, which decreases intracellular cAMP, leads to cilium shortening and thus decreases flow-induced signaling. May be an ion-channel regulator. Involved in adhesive protein-protein and protein-carbohydrate interactions. Likely to be involved with polycystin-1-interacting protein 1 in the detection, sequestration and exocytosis of senescent mitochondria. The chain is Polycystin-1 from Mus musculus (Mouse).